We begin with the raw amino-acid sequence, 578 residues long: Proline--tRNA ligase (578 aa).

Belongs to the class-II aminoacyl-tRNA synthetase family. ProS type 1 subfamily. As to quaternary structure, homodimer.

The protein localises to the cytoplasm. It catalyses the reaction tRNA(Pro) + L-proline + ATP = L-prolyl-tRNA(Pro) + AMP + diphosphate. In terms of biological role, catalyzes the attachment of proline to tRNA(Pro) in a two-step reaction: proline is first activated by ATP to form Pro-AMP and then transferred to the acceptor end of tRNA(Pro). As ProRS can inadvertently accommodate and process non-cognate amino acids such as alanine and cysteine, to avoid such errors it has two additional distinct editing activities against alanine. One activity is designated as 'pretransfer' editing and involves the tRNA(Pro)-independent hydrolysis of activated Ala-AMP. The other activity is designated 'posttransfer' editing and involves deacylation of mischarged Ala-tRNA(Pro). The misacylated Cys-tRNA(Pro) is not edited by ProRS. The chain is Proline--tRNA ligase from Burkholderia pseudomallei (strain 668).